The sequence spans 821 residues: Zinc finger protein 41 (821 aa).

The disordered stretch occupies residues 1 to 55 (MAANGDSPPWSPALAAEGRGSSCEVRRERTPEARIHSVKRYPDLSPGPKGRSSAD). A compositionally biased stretch (basic and acidic residues) spans 24 to 35 (EVRRERTPEARI). The KRAB domain maps to 69–140 (VSFEDVTVDF…EGEAPHQSCS (72 aa)). Lys120 is covalently cross-linked (Glycyl lysine isopeptide (Lys-Gly) (interchain with G-Cter in SUMO2)). A C2H2-type 1 zinc finger spans residues 313 to 335 (YVCTECVMGFTQKSHLFEHQRIH). A C2H2-type 2; degenerate zinc finger spans residues 341-364 (RECDKSNKVFPQKPQVDVHPSVYT). 10 consecutive C2H2-type zinc fingers follow at residues 369–391 (YLCT…QKIH), 397–419 (YKCS…LRIH), 425–447 (YECS…QKTH), 453–475 (YECN…QRIH), 481–503 (YVCA…QRIH), 509–531 (YECS…QRIH), 537–559 (YICT…QKTH), 565–587 (YMCA…QKTH), 593–615 (YKCN…QKSH), and 621–643 (YECK…QRIH). Lys647 is covalently cross-linked (Glycyl lysine isopeptide (Lys-Gly) (interchain with G-Cter in SUMO2)). 6 consecutive C2H2-type zinc fingers follow at residues 649–671 (YVCP…HRIH), 677–699 (YECS…QKIH), 705–727 (NICA…QKIH), 733–755 (YECG…QKSH), 761–783 (YECS…QIIH), and 789–811 (YACT…QKMH).

It belongs to the krueppel C2H2-type zinc-finger protein family. Expressed in the heart, brain, placenta, lung, liver, skeletal muscle, kidney and pancreas.

The protein localises to the nucleus. Functionally, may be involved in transcriptional regulation. The polypeptide is Zinc finger protein 41 (ZNF41) (Homo sapiens (Human)).